A 160-amino-acid chain; its full sequence is Phosphopantetheine adenylyltransferase (160 aa).

Thr11 is a substrate binding site. Residues Thr11–Phe12 and His19 each bind ATP. Substrate is bound by residues Lys43, Leu75, and Arg89. ATP-binding positions include Gly90–Arg92, Glu100, and His125–Ser131.

The protein belongs to the bacterial CoaD family. Homohexamer. The cofactor is Mg(2+).

The protein resides in the cytoplasm. The catalysed reaction is (R)-4'-phosphopantetheine + ATP + H(+) = 3'-dephospho-CoA + diphosphate. It functions in the pathway cofactor biosynthesis; coenzyme A biosynthesis; CoA from (R)-pantothenate: step 4/5. Reversibly transfers an adenylyl group from ATP to 4'-phosphopantetheine, yielding dephospho-CoA (dPCoA) and pyrophosphate. The polypeptide is Phosphopantetheine adenylyltransferase (Methylobacillus flagellatus (strain ATCC 51484 / DSM 6875 / VKM B-1610 / KT)).